A 133-amino-acid chain; its full sequence is Interferon-induced transmembrane protein 3 (133 aa).

Topologically, residues 1-57 are cytoplasmic; sequence MNHTVQTFFSPVNSGQPPNYEMLKEEHEVAVLGAPHNPAPPTSTVIHIRSETSVPDH. Position 20 is a phosphotyrosine (tyrosine 20). Lysine 24 is covalently cross-linked (Glycyl lysine isopeptide (Lys-Gly) (interchain with G-Cter in ubiquitin)). Residues 58 to 78 constitute an intramembrane region (helical); that stretch reads VVWSLFNTLFMNPCCLGFIAF. The interaction with SPP1 stretch occupies residues 60-93; the sequence is WSLFNTLFMNPCCLGFIAFAYSVKSRDRKMVGDV. Residues cysteine 71 and cysteine 72 are each lipidated (S-palmitoyl cysteine). The Cytoplasmic portion of the chain corresponds to 79 to 107; sequence AYSVKSRDRKMVGDVTGAQAYASTAKCLN. Glycyl lysine isopeptide (Lys-Gly) (interchain with G-Cter in ubiquitin) cross-links involve residues lysine 83, lysine 88, and lysine 104. Residue cysteine 105 is the site of S-palmitoyl cysteine attachment. A helical transmembrane segment spans residues 108–128; sequence IWALILGILMTILLIVIPVLI. The interval 108 to 133 is interaction with VAPA; sequence IWALILGILMTILLIVIPVLIFQAYG. Topologically, residues 129–133 are extracellular; that stretch reads FQAYG.

The protein belongs to the CD225/Dispanin family. As to quaternary structure, interacts with ATP6V0B. Interacts with CD81. Interacts with SPP1; the interaction reduces OPN expression. Interacts with VAPA. Interacts with BRI3 (isoforms 1 and 2); the interaction with isoform 2 is weaker than with isoform 1. Palmitoylation on membrane-proximal cysteines controls clustering in membrane compartments and antiviral activity against influenza virus and hepatitis C virus (HCV). Has no effect on anti-SARS-CoV-2 activity. Post-translationally, not glycosylated. In terms of processing, polyubiquitinated with both 'Lys-48' and 'Lys-63' linkages. Ubiquitination negatively regulates antiviral activity. Lys-24 is the most prevalent ubiquitination site. Phosphorylation at Tyr-20 is required for endosomal and lysosomal location.

It is found in the cell membrane. Its subcellular location is the late endosome membrane. The protein resides in the early endosome membrane. The protein localises to the lysosome membrane. It localises to the cytoplasm. It is found in the perinuclear region. In terms of biological role, IFN-induced antiviral protein which disrupts intracellular cholesterol homeostasis. Inhibits the entry of viruses to the host cell cytoplasm by preventing viral fusion with cholesterol depleted endosomes. May inactivate new enveloped viruses which buds out of the infected cell, by letting them go out with a cholesterol depleted membrane. Active against multiple viruses, including influenza A virus, SARS coronaviruses (SARS-CoV and SARS-CoV-2), Marburg virus (MARV), Ebola virus (EBOV), Dengue virus (DNV), West Nile virus (WNV), human immunodeficiency virus type 1 (HIV-1), hepatitis C virus (HCV) and vesicular stomatitis virus (VSV). Can inhibit: influenza virus hemagglutinin protein-mediated viral entry, MARV and EBOV GP1,2-mediated viral entry, SARS-CoV and SARS-CoV-2 S protein-mediated viral entry and VSV G protein-mediated viral entry. Plays a critical role in the structural stability and function of vacuolar ATPase (v-ATPase). Establishes physical contact with the v-ATPase of endosomes which is critical for proper clathrin localization and is also required for the function of the v-ATPase to lower the pH in phagocytic endosomes thus establishing an antiviral state. In hepatocytes, IFITM proteins act in a coordinated manner to restrict HCV infection by targeting the endocytosed HCV virion for lysosomal degradation. IFITM2 and IFITM3 display anti-HCV activity that may complement the anti-HCV activity of IFITM1 by inhibiting the late stages of HCV entry, possibly in a coordinated manner by trapping the virion in the endosomal pathway and targeting it for degradation at the lysosome. Exerts opposing activities on SARS-CoV-2, including amphipathicity-dependent restriction of virus at endosomes and amphipathicity-independent enhancement of infection at the plasma membrane. The polypeptide is Interferon-induced transmembrane protein 3 (Homo sapiens (Human)).